The chain runs to 176 residues: Crossover junction endodeoxyribonuclease RuvC (176 aa).

Catalysis depends on residues D7, E68, and D141. The Mg(2+) site is built by D7, E68, and D141.

Belongs to the RuvC family. In terms of assembly, homodimer which binds Holliday junction (HJ) DNA. The HJ becomes 2-fold symmetrical on binding to RuvC with unstacked arms; it has a different conformation from HJ DNA in complex with RuvA. In the full resolvosome a probable DNA-RuvA(4)-RuvB(12)-RuvC(2) complex forms which resolves the HJ. Mg(2+) serves as cofactor.

It localises to the cytoplasm. The catalysed reaction is Endonucleolytic cleavage at a junction such as a reciprocal single-stranded crossover between two homologous DNA duplexes (Holliday junction).. Functionally, the RuvA-RuvB-RuvC complex processes Holliday junction (HJ) DNA during genetic recombination and DNA repair. Endonuclease that resolves HJ intermediates. Cleaves cruciform DNA by making single-stranded nicks across the HJ at symmetrical positions within the homologous arms, yielding a 5'-phosphate and a 3'-hydroxyl group; requires a central core of homology in the junction. The consensus cleavage sequence is 5'-(A/T)TT(C/G)-3'. Cleavage occurs on the 3'-side of the TT dinucleotide at the point of strand exchange. HJ branch migration catalyzed by RuvA-RuvB allows RuvC to scan DNA until it finds its consensus sequence, where it cleaves and resolves the cruciform DNA. This chain is Crossover junction endodeoxyribonuclease RuvC, found in Streptomyces avermitilis (strain ATCC 31267 / DSM 46492 / JCM 5070 / NBRC 14893 / NCIMB 12804 / NRRL 8165 / MA-4680).